Reading from the N-terminus, the 125-residue chain is Holo-[acyl-carrier-protein] synthase (125 aa).

Mg(2+)-binding residues include Asp8 and Glu57.

This sequence belongs to the P-Pant transferase superfamily. AcpS family. It depends on Mg(2+) as a cofactor.

It localises to the cytoplasm. The enzyme catalyses apo-[ACP] + CoA = holo-[ACP] + adenosine 3',5'-bisphosphate + H(+). Functionally, transfers the 4'-phosphopantetheine moiety from coenzyme A to a Ser of acyl-carrier-protein. The protein is Holo-[acyl-carrier-protein] synthase of Koribacter versatilis (strain Ellin345).